Consider the following 144-residue polypeptide: Small ribosomal subunit protein eS19 (144 aa).

It belongs to the eukaryotic ribosomal protein eS19 family.

The chain is Small ribosomal subunit protein eS19 (RPS19) from Argopecten irradians (Bay scallop).